We begin with the raw amino-acid sequence, 269 residues long: Hydroxyethylthiazole kinase (269 aa).

Position 41 (Met41) interacts with substrate. Positions 117 and 165 each coordinate ATP. Gly192 serves as a coordination point for substrate.

Belongs to the Thz kinase family. It depends on Mg(2+) as a cofactor.

It carries out the reaction 5-(2-hydroxyethyl)-4-methylthiazole + ATP = 4-methyl-5-(2-phosphooxyethyl)-thiazole + ADP + H(+). It functions in the pathway cofactor biosynthesis; thiamine diphosphate biosynthesis; 4-methyl-5-(2-phosphoethyl)-thiazole from 5-(2-hydroxyethyl)-4-methylthiazole: step 1/1. Functionally, catalyzes the phosphorylation of the hydroxyl group of 4-methyl-5-beta-hydroxyethylthiazole (THZ). The chain is Hydroxyethylthiazole kinase from Actinobacillus succinogenes (strain ATCC 55618 / DSM 22257 / CCUG 43843 / 130Z).